A 670-amino-acid chain; its full sequence is Transcription factor Ken 2 (670 aa).

The BTB domain occupies 108-176; that stretch reads TDLLLICDGK…LYSGQVYVRS (69 aa). Disordered stretches follow at residues 200–288 and 307–470; these read SDGS…DRDR and NNHP…SDDA. A compositionally biased stretch (polar residues) spans 218–230; it reads NRNTEGITGSSVV. The span at 325–338 shows a compositional bias: basic residues; it reads HHLHHHHHHHHRQL. Composition is skewed to gly residues over residues 351-368 and 389-400; these read GGGSGNDGASEGGSGESG and SGGGGAGSGRRS. The span at 407–419 shows a compositional bias: acidic residues; that stretch reads EPAEDDEDYELDV. Polar residues predominate over residues 451-464; sequence SDPVNLSIVKQQQD. The segment at 586 to 594 adopts a C2H2-type 1; degenerate zinc-finger fold; that stretch reads NLKTHLRVH. 2 C2H2-type zinc fingers span residues 600–623 and 636–658; these read FACRLCVAMFKQKAHLLKHLCSVH and YTCCFCSLVFETLQELVRHLSGH.

The protein resides in the nucleus. Its function is as follows. Transcription factor required for terminalia development. Negative regulator of the JAK/STAT pathway: represses JAK/STAT-dependent expression of ventral veins lacking (vvl) in the posterior spiracles. This is Transcription factor Ken 2 from Culex quinquefasciatus (Southern house mosquito).